The primary structure comprises 293 residues: 16S rRNA (guanine(1405)-N(7))-methyltransferase (293 aa).

Residues F47, 80 to 82 (HAS), R86, A111, D134, 160 to 161 (DL), L176, and Q185 contribute to the S-adenosyl-L-methionine site. Over residues 258–274 (GRPAPAEGAAEPGATRP) the composition is skewed to low complexity. The disordered stretch occupies residues 258–293 (GRPAPAEGAAEPGATRPVVDVPATARPDADRVDPTG). Residues 284–293 (PDADRVDPTG) show a composition bias toward basic and acidic residues.

Belongs to the methyltransferase superfamily. Aminoglycoside resistance family.

The catalysed reaction is guanosine(1405) in 16S rRNA + S-adenosyl-L-methionine = N(7)-methylguanosine(1405) in 16S rRNA + S-adenosyl-L-homocysteine. Its function is as follows. Specifically methylates the N(7) position of guanine 1405 in 16S rRNA. Confers resistance to aminoglycosides. This is 16S rRNA (guanine(1405)-N(7))-methyltransferase (fmrO) from Micromonospora olivasterospora.